The chain runs to 500 residues: Probable cytosol aminopeptidase (500 aa).

Positions 265 and 270 each coordinate Mn(2+). Lysine 277 is a catalytic residue. Positions 288, 347, and 349 each coordinate Mn(2+). Arginine 351 is an active-site residue.

It belongs to the peptidase M17 family. Mn(2+) is required as a cofactor.

The protein resides in the cytoplasm. The catalysed reaction is Release of an N-terminal amino acid, Xaa-|-Yaa-, in which Xaa is preferably Leu, but may be other amino acids including Pro although not Arg or Lys, and Yaa may be Pro. Amino acid amides and methyl esters are also readily hydrolyzed, but rates on arylamides are exceedingly low.. It carries out the reaction Release of an N-terminal amino acid, preferentially leucine, but not glutamic or aspartic acids.. Presumably involved in the processing and regular turnover of intracellular proteins. Catalyzes the removal of unsubstituted N-terminal amino acids from various peptides. In Rickettsia felis (strain ATCC VR-1525 / URRWXCal2) (Rickettsia azadi), this protein is Probable cytosol aminopeptidase.